A 281-amino-acid polypeptide reads, in one-letter code: Pantothenate synthetase (281 aa).

Residue 30 to 37 coordinates ATP; sequence MGYLHEGH. His-37 (proton donor) is an active-site residue. Gln-61 is a binding site for (R)-pantoate. Beta-alanine is bound at residue Gln-61. Position 147–150 (147–150) interacts with ATP; the sequence is GEKD. Gln-153 serves as a coordination point for (R)-pantoate. Residues Ile-176 and 184-187 each bind ATP; that span reads KSSR.

Belongs to the pantothenate synthetase family. Homodimer.

It is found in the cytoplasm. It catalyses the reaction (R)-pantoate + beta-alanine + ATP = (R)-pantothenate + AMP + diphosphate + H(+). It participates in cofactor biosynthesis; (R)-pantothenate biosynthesis; (R)-pantothenate from (R)-pantoate and beta-alanine: step 1/1. Its function is as follows. Catalyzes the condensation of pantoate with beta-alanine in an ATP-dependent reaction via a pantoyl-adenylate intermediate. The protein is Pantothenate synthetase of Clostridium botulinum (strain Langeland / NCTC 10281 / Type F).